The chain runs to 251 residues: Haloacid dehalogenase-like hydrolase domain-containing protein 3 (251 aa).

Residue lysine 15 is modified to N6-acetyllysine; alternate. Lysine 15 carries the post-translational modification N6-succinyllysine; alternate.

The protein belongs to the HAD-like hydrolase superfamily.

This chain is Haloacid dehalogenase-like hydrolase domain-containing protein 3 (HDHD3), found in Homo sapiens (Human).